A 95-amino-acid polypeptide reads, in one-letter code: Small ribosomal subunit protein bS16 (95 aa).

This sequence belongs to the bacterial ribosomal protein bS16 family.

The chain is Small ribosomal subunit protein bS16 from Mycoplasma genitalium (strain ATCC 33530 / DSM 19775 / NCTC 10195 / G37) (Mycoplasmoides genitalium).